We begin with the raw amino-acid sequence, 113 residues long: Ferredoxin-1 (113 aa).

4Fe-4S ferredoxin-type domains follow at residues 2-30 and 31-60; these read TYIV…YEGE and NFLV…PDTE. [3Fe-4S] cluster contacts are provided by Cys9 and Cys17. The [4Fe-4S] cluster site is built by Cys21, Cys40, Cys43, and Cys46. Cys50 contacts [3Fe-4S] cluster.

[4Fe-4S] cluster is required as a cofactor. The cofactor is [3Fe-4S] cluster.

This chain is Ferredoxin-1 (fdxA), found in Caulobacter vibrioides (strain ATCC 19089 / CIP 103742 / CB 15) (Caulobacter crescentus).